The chain runs to 208 residues: Holliday junction branch migration complex subunit RuvA (208 aa).

A domain I region spans residues 1–63 (MIAFVSGPVA…EDSLTLYGFA (63 aa)). Positions 64 to 142 (NDDERQVFEL…EPVGAHIGQQ (79 aa)) are domain II. The interval 143 to 147 (GIGTP) is flexible linker. The domain III stretch occupies residues 148–208 (VTSGWRDQLQ…AALQTLNRAR (61 aa)).

The protein belongs to the RuvA family. In terms of assembly, homotetramer. Forms an RuvA(8)-RuvB(12)-Holliday junction (HJ) complex. HJ DNA is sandwiched between 2 RuvA tetramers; dsDNA enters through RuvA and exits via RuvB. An RuvB hexamer assembles on each DNA strand where it exits the tetramer. Each RuvB hexamer is contacted by two RuvA subunits (via domain III) on 2 adjacent RuvB subunits; this complex drives branch migration. In the full resolvosome a probable DNA-RuvA(4)-RuvB(12)-RuvC(2) complex forms which resolves the HJ.

It localises to the cytoplasm. Its function is as follows. The RuvA-RuvB-RuvC complex processes Holliday junction (HJ) DNA during genetic recombination and DNA repair, while the RuvA-RuvB complex plays an important role in the rescue of blocked DNA replication forks via replication fork reversal (RFR). RuvA specifically binds to HJ cruciform DNA, conferring on it an open structure. The RuvB hexamer acts as an ATP-dependent pump, pulling dsDNA into and through the RuvAB complex. HJ branch migration allows RuvC to scan DNA until it finds its consensus sequence, where it cleaves and resolves the cruciform DNA. This is Holliday junction branch migration complex subunit RuvA from Streptomyces griseus subsp. griseus (strain JCM 4626 / CBS 651.72 / NBRC 13350 / KCC S-0626 / ISP 5235).